Reading from the N-terminus, the 386-residue chain is Zinc finger CCCH domain-containing protein 39 (386 aa).

The disordered stretch occupies residues 1–90 (MDSSYSDSRP…SSSNPWMVPS (90 aa)). Positions 20–37 (WNQTQMIDSMANPMNNEQ) are enriched in polar residues. The span at 43–58 (LSESQSQSQPSQQLQP) shows a compositional bias: low complexity. Residues 72–85 (NPASSFPQPSSSNP) show a composition bias toward polar residues. The C3H1-type 1 zinc finger occupies 104 to 131 (FYKTRMCAKFRAGTCRNGELCNFAHGIE). Residues 136–166 (PPSNWQEIVGPPPAGQDRERERERERERERP) are disordered. The span at 151 to 166 (QDRERERERERERERP) shows a compositional bias: basic and acidic residues. 2 consecutive C3H1-type zinc fingers follow at residues 183 to 211 (ILRM…HEDL) and 269 to 297 (YWKT…HGQA).

This is Zinc finger CCCH domain-containing protein 39 from Arabidopsis thaliana (Mouse-ear cress).